A 288-amino-acid polypeptide reads, in one-letter code: Mortality factor 4-like protein 2 (288 aa).

The segment covering 1–15 has biased composition (polar residues); sequence MSSRKQASQTRGQQS. The interval 1 to 115 is disordered; it reads MSSRKQASQT…DPTVESEEAF (115 aa). Ser-71 carries the phosphoserine modification. In terms of domain architecture, MRG spans 117–288; the sequence is SRMEVKVKIP…ASADYHRKAL (172 aa).

Component of the NuA4 histone acetyltransferase complex which contains the catalytic subunit KAT5/TIP60 and the subunits EP400, TRRAP/PAF400, BRD8/SMAP, EPC1, DMAP1/DNMAP1, RUVBL1/TIP49, RUVBL2, ING3, actin, ACTL6A/BAF53A, MORF4L1/MRG15, MORF4L2/MRGX, MRGBP, YEATS4/GAS41 and VPS72/YL1. The NuA4 complex interacts with MYC and the adenovirus E1A protein. MORF4L1 may also participate in the formation of NuA4 related complexes which lack the KAT5/TIP60 catalytic subunit, but which include the SWI/SNF related protein SRCAP. Component of the MSIN3A histone deacetylase complex, which includes SIN3A, HDAC2, ARID4B, MORF4L1, RBBP4/RbAp48, and RBBP7/RbAp46. Interacts with MRFAP1 and RB1. May also interact with one or more as yet undefined members of the TLE (transducin-like enhancer of split) family of transcriptional repressors.

The protein resides in the nucleus. Functionally, component of the NuA4 histone acetyltransferase complex which is involved in transcriptional activation of select genes principally by acetylation of nucleosomal histone H4 and H2A. This modification may both alter nucleosome - DNA interactions and promote interaction of the modified histones with other proteins which positively regulate transcription. This complex may be required for the activation of transcriptional programs associated with oncogene and proto-oncogene mediated growth induction, tumor suppressor mediated growth arrest and replicative senescence, apoptosis, and DNA repair. The NuA4 complex ATPase and helicase activities seem to be, at least in part, contributed by the association of RUVBL1 and RUVBL2 with EP400. NuA4 may also play a direct role in DNA repair when directly recruited to sites of DNA damage. Also a component of the MSIN3A complex which acts to repress transcription by deacetylation of nucleosomal histones. The chain is Mortality factor 4-like protein 2 (Morf4l2) from Rattus norvegicus (Rat).